The chain runs to 311 residues: MTMDRPPAPPPPSSDPRDARRHDPEADATSEPDSSRGGMEPPAEPQLLLNGAAKEAGRPSPGPPAAAVPVIELVRRGGSLDIKSREAAGEAMQRAPGAEPCRAAEAACEARMVQLSPPALPLQPPGRAMLYNLGQPLGTIGSGFFGEPDSFSMYGSNRVKRRPSPYEMEITDGPHTKVVRRIFTNSRERWRQQNVNGAFAELRKLIPTHPPDKKLSKNEILRLAMKYINFLAKLLNDQEEEGNQRGKVNKDSGIVQEDLLQDMLSPNSSCGSSLDGAASPDSFTEEHDTLDSKHARNLHHAILPVEGSAQR.

Positions 1-14 (MTMDRPPAPPPPSS) are enriched in pro residues. Residues 1-67 (MTMDRPPAPP…RPSPGPPAAA (67 aa)) are disordered. Residues 15–25 (DPRDARRHDPE) are compositionally biased toward basic and acidic residues. The bHLH domain maps to 179 to 231 (VRRIFTNSRERWRQQNVNGAFAELRKLIPTHPPDKKLSKNEILRLAMKYINFL). The disordered stretch occupies residues 265-311 (SPNSSCGSSLDGAASPDSFTEEHDTLDSKHARNLHHAILPVEGSAQR). Residues 284–294 (TEEHDTLDSKH) show a composition bias toward basic and acidic residues.

Efficient DNA binding requires dimerization with another bHLH protein. Forms heterodimers with TCF3. In terms of processing, phosphorylated on serine residues.

The protein resides in the nucleus. Implicated in the genesis of hemopoietic malignancies. It may play an important role in hemopoietic differentiation. The sequence is that of T-cell acute lymphocytic leukemia protein 1 homolog (TAL1) from Gallus gallus (Chicken).